The primary structure comprises 201 residues: MLLFVGLGNPGAKYSRNRHNIGFMAVDEISRRHRFSPWRRRFQGETSEGTLDSERVILLKPTTYMNESGRAVQEAASFFKLGVGDVTVFQDELELAPGKLRVKVGGGIAGHNGLRSISAHLGNDYRRVRLGIGHPGVKELVHGHVLSDFAKSEMPWVEALCEAVADNAELLTGKRDSTFANKVHLALQAKGFLDKGDAGAA.

Tyr-14 contributes to the tRNA binding site. The active-site Proton acceptor is the His-19. Tyr-64, Asn-66, and Asn-112 together coordinate tRNA.

Belongs to the PTH family. In terms of assembly, monomer.

It localises to the cytoplasm. The enzyme catalyses an N-acyl-L-alpha-aminoacyl-tRNA + H2O = an N-acyl-L-amino acid + a tRNA + H(+). Its function is as follows. Hydrolyzes ribosome-free peptidyl-tRNAs (with 1 or more amino acids incorporated), which drop off the ribosome during protein synthesis, or as a result of ribosome stalling. Functionally, catalyzes the release of premature peptidyl moieties from peptidyl-tRNA molecules trapped in stalled 50S ribosomal subunits, and thus maintains levels of free tRNAs and 50S ribosomes. In Bradyrhizobium sp. (strain ORS 278), this protein is Peptidyl-tRNA hydrolase.